The primary structure comprises 679 residues: Penicillin-binding protein 1A (679 aa).

Positions 1 to 14 (MTERKREHKDRKQN) are enriched in basic residues. The tract at residues 1–20 (MTERKREHKDRKQNKNSPKN) is disordered. Topologically, residues 1 to 30 (MTERKREHKDRKQNKNSPKNQSKVTKFLKW) are cytoplasmic. The helical; Signal-anchor for type II membrane protein transmembrane segment at 31–51 (FFIGILLLGITAVTVVGIYVL) threads the bilayer. The Extracellular portion of the chain corresponds to 52-679 (SIIRSSPELD…QYKEVDNLVE (628 aa)). The segment at 72–244 (SILYDDQGNF…PTSYDGLSEA (173 aa)) is transglycosylase. The active-site Proton donor; for transglycosylase activity is glutamate 111. Residues 378–663 (ASATIIDYKT…TSPIFGKIMG (286 aa)) form a transpeptidase region. Serine 417 (acyl-ester intermediate; for transpeptidase activity) is an active-site residue.

The protein in the N-terminal section; belongs to the glycosyltransferase 51 family. This sequence in the C-terminal section; belongs to the transpeptidase family.

It localises to the cell membrane. The catalysed reaction is [GlcNAc-(1-&gt;4)-Mur2Ac(oyl-L-Ala-gamma-D-Glu-L-Lys-D-Ala-D-Ala)](n)-di-trans,octa-cis-undecaprenyl diphosphate + beta-D-GlcNAc-(1-&gt;4)-Mur2Ac(oyl-L-Ala-gamma-D-Glu-L-Lys-D-Ala-D-Ala)-di-trans,octa-cis-undecaprenyl diphosphate = [GlcNAc-(1-&gt;4)-Mur2Ac(oyl-L-Ala-gamma-D-Glu-L-Lys-D-Ala-D-Ala)](n+1)-di-trans,octa-cis-undecaprenyl diphosphate + di-trans,octa-cis-undecaprenyl diphosphate + H(+). It catalyses the reaction Preferential cleavage: (Ac)2-L-Lys-D-Ala-|-D-Ala. Also transpeptidation of peptidyl-alanyl moieties that are N-acyl substituents of D-alanine.. Its pathway is cell wall biogenesis; peptidoglycan biosynthesis. Cell wall formation. Synthesis of cross-linked peptidoglycan from the lipid intermediates. The enzyme has a penicillin-insensitive transglycosylase N-terminal domain (formation of linear glycan strands) and a penicillin-sensitive transpeptidase C-terminal domain (cross-linking of the peptide subunits). In Clostridium perfringens (strain 13 / Type A), this protein is Penicillin-binding protein 1A (pbpA).